Reading from the N-terminus, the 345-residue chain is uncharacterized protein (345 aa).

Helical transmembrane passes span V9 to V31, T84 to L103, Y116 to T138, V148 to F170, V182 to A204, W269 to G286, I291 to Y308, and H313 to I335.

It localises to the cell membrane. This is an uncharacterized protein from Treponema pallidum (strain Nichols).